The following is a 213-amino-acid chain: Large ribosomal subunit protein uL3 (213 aa).

Belongs to the universal ribosomal protein uL3 family. In terms of assembly, part of the 50S ribosomal subunit. Forms a cluster with proteins L14 and L19.

In terms of biological role, one of the primary rRNA binding proteins, it binds directly near the 3'-end of the 23S rRNA, where it nucleates assembly of the 50S subunit. In Desulforudis audaxviator (strain MP104C), this protein is Large ribosomal subunit protein uL3.